A 265-amino-acid polypeptide reads, in one-letter code: Hydroxyethylthiazole kinase (265 aa).

Methionine 55 is a binding site for substrate. Residues arginine 130 and serine 176 each contribute to the ATP site. Glycine 203 lines the substrate pocket.

This sequence belongs to the Thz kinase family. Mg(2+) is required as a cofactor.

It carries out the reaction 5-(2-hydroxyethyl)-4-methylthiazole + ATP = 4-methyl-5-(2-phosphooxyethyl)-thiazole + ADP + H(+). It participates in cofactor biosynthesis; thiamine diphosphate biosynthesis; 4-methyl-5-(2-phosphoethyl)-thiazole from 5-(2-hydroxyethyl)-4-methylthiazole: step 1/1. In terms of biological role, catalyzes the phosphorylation of the hydroxyl group of 4-methyl-5-beta-hydroxyethylthiazole (THZ). The protein is Hydroxyethylthiazole kinase of Leptospira interrogans serogroup Icterohaemorrhagiae serovar copenhageni (strain Fiocruz L1-130).